Here is a 236-residue protein sequence, read N- to C-terminus: MKITWLGHAAFRLDFAGTAVLIDPFLTHNPVFKGDVAEVSKGVSHILLTHGHSDHIGDTAGIVKAAEAEGRKVIVVANPEVCGFLSGQGLSAFEPMNTGGTVKLDGFSVTMVRADHSSGGDGSNPTYLGNPNGLIVKAAGEPTLWHLGDTDLFSDMALISEIHQPKVAIVPIGDRFTMGPETAALAVRRFISAETVVPCHYGTFPLLVPDASGFVAALQGHSAKVVVPNSGESFEV.

This sequence belongs to the UPF0173 family.

The protein is UPF0173 metal-dependent hydrolase AZC_2841 of Azorhizobium caulinodans (strain ATCC 43989 / DSM 5975 / JCM 20966 / LMG 6465 / NBRC 14845 / NCIMB 13405 / ORS 571).